A 120-amino-acid chain; its full sequence is Small ribosomal subunit protein bS16 (120 aa).

A disordered region spans residues 80-120 (GLKKRPARNNPHKGEPGKKAQERIAAAKQAAEDAKAAEASA). Residues 81–90 (LKKRPARNNP) show a composition bias toward basic residues. Composition is skewed to basic and acidic residues over residues 91 to 101 (HKGEPGKKAQE) and 109 to 120 (AAEDAKAAEASA).

The protein belongs to the bacterial ribosomal protein bS16 family.

In Bartonella bacilliformis (strain ATCC 35685 / KC583 / Herrer 020/F12,63), this protein is Small ribosomal subunit protein bS16.